The chain runs to 453 residues: Ferruginol synthase (453 aa).

The chain crosses the membrane as a helical span at residues 15–35; that stretch reads LSKKYGPLMSIHLGSLYTVIV. C397 is a binding site for heme.

This sequence belongs to the cytochrome P450 family. Heme serves as cofactor. In terms of tissue distribution, expressed in leaf glandular trichomes.

The protein localises to the membrane. The enzyme catalyses abieta-8,11,13-triene + reduced [NADPH--hemoprotein reductase] + O2 = ferruginol + oxidized [NADPH--hemoprotein reductase] + H2O + H(+). It catalyses the reaction ferruginol + reduced [NADPH--hemoprotein reductase] + O2 = 11-hydroxyferruginol + oxidized [NADPH--hemoprotein reductase] + H2O + H(+). It carries out the reaction miltiradiene + 2 reduced [NADPH--hemoprotein reductase] + 2 O2 = 11-oxomiltiradiene + 2 oxidized [NADPH--hemoprotein reductase] + 3 H2O + 2 H(+). The protein operates within secondary metabolite biosynthesis; terpenoid biosynthesis. Monooxygenase involved in the biosynthesis of labdane-related diterpenes natural products. Catalyzes the oxidation of abietatriene to produce ferruginol. Ferruginol is an intermediate in the biosynthesis of carnosate, a potent antioxidant. May also convert miltiradiene into 11-oxomiltiradiene. This chain is Ferruginol synthase, found in Salvia pomifera (Apple sage).